The chain runs to 187 residues: CASP-like protein SELMODRAFT_416718 (187 aa).

A helical membrane pass occupies residues 1-21; it reads MMFGGVGMATLPLSLIFAFKN. The Extracellular segment spans residues 22 to 100; it reads RPKCVITRAQ…EAFPQGEKAD (79 aa). A helical membrane pass occupies residues 101-119; that stretch reads TSWALTVLFYLAKLVFGIL. The Cytoplasmic portion of the chain corresponds to 120-125; that stretch reads GLALSV. Residues 126–145 form a helical membrane-spanning segment; it reads IWLLHIIVFMLVNPPAFPFL. The Extracellular segment spans residues 146–155; that stretch reads NQVFIQLDSA. The helical transmembrane segment at 156–176 threads the bilayer; the sequence is WGLLGTTAFAIFCYYLVMSVI. Residues 177–187 are Cytoplasmic-facing; sequence SGEMHSIYPMK.

This sequence belongs to the Casparian strip membrane proteins (CASP) family. In terms of assembly, homodimer and heterodimers.

The protein localises to the cell membrane. This Selaginella moellendorffii (Spikemoss) protein is CASP-like protein SELMODRAFT_416718.